We begin with the raw amino-acid sequence, 326 residues long: N-acetyl-gamma-glutamyl-phosphate reductase (326 aa).

The active site involves C155.

This sequence belongs to the NAGSA dehydrogenase family. Type 1 subfamily.

It is found in the cytoplasm. The enzyme catalyses N-acetyl-L-glutamate 5-semialdehyde + phosphate + NADP(+) = N-acetyl-L-glutamyl 5-phosphate + NADPH + H(+). The protein operates within amino-acid biosynthesis; L-arginine biosynthesis; N(2)-acetyl-L-ornithine from L-glutamate: step 3/4. Functionally, catalyzes the NADPH-dependent reduction of N-acetyl-5-glutamyl phosphate to yield N-acetyl-L-glutamate 5-semialdehyde. This Shewanella sediminis (strain HAW-EB3) protein is N-acetyl-gamma-glutamyl-phosphate reductase.